Here is a 253-residue protein sequence, read N- to C-terminus: Ubiquinone biosynthesis O-methyltransferase (253 aa).

The S-adenosyl-L-methionine site is built by Arg47, Gly78, Asp99, and Met141.

It belongs to the methyltransferase superfamily. UbiG/COQ3 family.

The enzyme catalyses a 3-demethylubiquinol + S-adenosyl-L-methionine = a ubiquinol + S-adenosyl-L-homocysteine + H(+). It catalyses the reaction a 3-(all-trans-polyprenyl)benzene-1,2-diol + S-adenosyl-L-methionine = a 2-methoxy-6-(all-trans-polyprenyl)phenol + S-adenosyl-L-homocysteine + H(+). It participates in cofactor biosynthesis; ubiquinone biosynthesis. Its function is as follows. O-methyltransferase that catalyzes the 2 O-methylation steps in the ubiquinone biosynthetic pathway. The sequence is that of Ubiquinone biosynthesis O-methyltransferase from Rhodopseudomonas palustris (strain BisA53).